Reading from the N-terminus, the 611-residue chain is Alkyldihydroxyacetonephosphate synthase (611 aa).

The region spanning 137 to 317 (VKNAPDLIVL…TEAVMKVHAV (181 aa)) is the FAD-binding PCMH-type domain. Residues 169–175 (PMGGGSN), 237–243 (DSFEFST), 250–255 (TCSSGH), and 301–307 (EGTLGII) each bind FAD. R447 serves as a coordination point for substrate. Y508 functions as the Proton donor/acceptor in the catalytic mechanism. Residues 544-546 (HHH) are important for enzyme activity. Residues 609–611 (PKL) carry the Microbody targeting signal motif.

The protein belongs to the FAD-binding oxidoreductase/transferase type 4 family. As to quaternary structure, homodimer. FAD serves as cofactor.

Its subcellular location is the peroxisome. The enzyme catalyses a long chain fatty alcohol + a 1-acylglycerone 3-phosphate = a 1-O-alkylglycerone 3-phosphate + a long-chain fatty acid + H(+). The protein operates within glycerolipid metabolism; ether lipid biosynthesis. Functionally, catalyzes the exchange of an acyl for a long-chain alkyl group and the formation of the ether bond in the biosynthesis of ether phospholipids. The sequence is that of Alkyldihydroxyacetonephosphate synthase (eapA) from Dictyostelium discoideum (Social amoeba).